A 126-amino-acid chain; its full sequence is Thioredoxin H-type 1 (126 aa).

The 119-residue stretch at 2–120 (AANDATSSEE…LQQTIVKHAA (119 aa)) folds into the Thioredoxin domain. Catalysis depends on nucleophile residues Cys46 and Cys49. Cys46 and Cys49 are joined by a disulfide.

This sequence belongs to the thioredoxin family. Plant H-type subfamily.

The protein localises to the cytoplasm. Participates in various redox reactions through the reversible oxidation of the active center dithiol to a disulfide. The H form is known to activate a number of cytosolic enzymes. The sequence is that of Thioredoxin H-type 1 from Nicotiana tabacum (Common tobacco).